The following is a 320-amino-acid chain: MKLNSLINLIQKSIYSCTLLLIILNIICVAPNSSNAFPIYAQQAYESPREATGRIVCANCHLAQKPVEIEAPQAVLPNTVFETVVKIPYDSNAKQILGNGSKGGLNVGAVVILPEGFKLAPVNRLSTELKEKTRNLYIQPYSAKQDNILVIGPISGDKNREIVFPILSPDPAKDKKAHFFKYPIYVGGNRGRGQIYPTGDKSNNNIVSALSSGKINKIELLDKGGFIIHVTNSSNVESTQKISPGLELRVKEGDTIQLDQALNSDPNVGGFGQNETEIVLQSPNRIKGMIVFFFASVLAQIFFVLKKKQFEKVQAAEMNF.

The signal sequence occupies residues 1–35 (MKLNSLINLIQKSIYSCTLLLIILNIICVAPNSSN). Residues phenylalanine 37, cysteine 57, cysteine 60, and histidine 61 each coordinate heme. A helical transmembrane segment spans residues 286–306 (IKGMIVFFFASVLAQIFFVLK).

This sequence belongs to the cytochrome f family. In terms of assembly, the 4 large subunits of the cytochrome b6-f complex are cytochrome b6, subunit IV (17 kDa polypeptide, petD), cytochrome f and the Rieske protein, while the 4 small subunits are PetG, PetL, PetM and PetN. The complex functions as a dimer. The cofactor is heme.

It is found in the plastid. The protein localises to the chloroplast thylakoid membrane. Its function is as follows. Component of the cytochrome b6-f complex, which mediates electron transfer between photosystem II (PSII) and photosystem I (PSI), cyclic electron flow around PSI, and state transitions. In Pyropia yezoensis (Susabi-nori), this protein is Cytochrome f.